Here is a 171-residue protein sequence, read N- to C-terminus: S-ribosylhomocysteine lyase (171 aa).

Fe cation is bound by residues H54, H58, and C128.

Belongs to the LuxS family. In terms of assembly, homodimer. It depends on Fe cation as a cofactor.

The enzyme catalyses S-(5-deoxy-D-ribos-5-yl)-L-homocysteine = (S)-4,5-dihydroxypentane-2,3-dione + L-homocysteine. Functionally, involved in the synthesis of autoinducer 2 (AI-2) which is secreted by bacteria and is used to communicate both the cell density and the metabolic potential of the environment. The regulation of gene expression in response to changes in cell density is called quorum sensing. Catalyzes the transformation of S-ribosylhomocysteine (RHC) to homocysteine (HC) and 4,5-dihydroxy-2,3-pentadione (DPD). This is S-ribosylhomocysteine lyase from Serratia proteamaculans (strain 568).